The chain runs to 180 residues: Hypoxanthine-guanine phosphoribosyltransferase (180 aa).

Diphosphate is bound by residues K43 and G44. Positions 99 and 100 each coordinate Mg(2+). Catalysis depends on D103, which acts as the Proton acceptor. Residues K131, F152 to I153, and D159 each bind GMP. R165 provides a ligand contact to diphosphate.

This sequence belongs to the purine/pyrimidine phosphoribosyltransferase family. Mg(2+) is required as a cofactor.

The protein localises to the cytoplasm. It catalyses the reaction IMP + diphosphate = hypoxanthine + 5-phospho-alpha-D-ribose 1-diphosphate. The enzyme catalyses GMP + diphosphate = guanine + 5-phospho-alpha-D-ribose 1-diphosphate. The protein operates within purine metabolism; IMP biosynthesis via salvage pathway; IMP from hypoxanthine: step 1/1. It participates in purine metabolism; GMP biosynthesis via salvage pathway; GMP from guanine: step 1/1. Purine salvage pathway enzyme that catalyzes the transfer of the ribosyl-5-phosphate group from 5-phospho-alpha-D-ribose 1-diphosphate (PRPP) to the N9 position of the 6-oxopurines hypoxanthine and guanine to form the corresponding ribonucleotides IMP (inosine 5'-monophosphate) and GMP (guanosine 5'-monophosphate), with the release of PPi. The polypeptide is Hypoxanthine-guanine phosphoribosyltransferase (hpt) (Streptococcus pyogenes serotype M3 (strain ATCC BAA-595 / MGAS315)).